The following is a 192-amino-acid chain: Erythropoietin (192 aa).

The signal sequence occupies residues 1 to 26 (MGVPERPTLLLLLSLLLIPLGLPVLC). Cys-33 and Cys-187 are oxidised to a cystine. Asn-50, Asn-64, and Asn-109 each carry an N-linked (GlcNAc...) asparagine glycan.

It belongs to the EPO/TPO family. Produced by kidney or liver of adult mammals and by liver of fetal or neonatal mammals.

It is found in the secreted. In terms of biological role, hormone involved in the regulation of erythrocyte proliferation and differentiation and the maintenance of a physiological level of circulating erythrocyte mass. Binds to EPOR leading to EPOR dimerization and JAK2 activation thereby activating specific downstream effectors, including STAT1 and STAT3. This Mus musculus (Mouse) protein is Erythropoietin (Epo).